Here is a 341-residue protein sequence, read N- to C-terminus: MVDAMNQEWWKKASDVVNAFHKEKAAIPSNAQRAREDLKENIAFLRTYLEFNYNLCDKVVFSGSAYEDLNISGDNIEFDVMLIAQRSNFLYLTECNNGVCKIRSNSPFLNYPFDEDFNIDSEKYRSFFFGLIQKWSNMMMTHKKKSFTLVNHGVATQMNVNDEKGILWYQVDLVPCFEAKSSLISEEKFYCVPKPIPNQRLYWRLSYSIDETQIAKKLSNDAKKCIRIIKALFKLETNGLFTKFTSYHIKTSAFYLKERGNWPNEENLGRSIYDFLVFIKESLKNGELKHFFDRTINLLDKIEVSTEQLANTINGWLKNEQKFLTKFSSSIDANIKQLAIK.

ATP-binding positions include S64 and 77-79 (EFD). The Mg(2+) site is built by E77, D79, and D172. D172 contributes to the GTP binding site. Residues K230 and 246–250 (SYHIK) contribute to the ATP site. E258 is a binding site for Mn(2+).

This sequence belongs to the mab-21 family. It depends on Mg(2+) as a cofactor. The cofactor is Mn(2+).

The enzyme catalyses GTP + ATP = 2',3'-cGAMP + 2 diphosphate. It carries out the reaction GTP + ATP = pppGp(2'-5')A + diphosphate. It catalyses the reaction pppGp(2'-5')A = 2',3'-cGAMP + diphosphate. In terms of biological role, nucleotidyltransferase that catalyzes the formation of cyclic GMP-AMP (2',3'-cGAMP) from ATP and GTP and plays a key role in innate immunity. Acts as a key sensor of double-stranded RNA (dsRNA), the presence of dsRNA in the cytoplasm being a danger signal that triggers the immune responses. Directly binds dsRNA, activating the nucleotidyltransferase activity, leading to synthesis of 2',3'-cGAMP, a second messenger that binds to and activates Sting, thereby triggering the immune response via activation of the NF-kappa-B transcription factor. The protein is Cyclic GMP-AMP synthase-like receptor of Hydra vulgaris (Hydra).